Consider the following 401-residue polypeptide: Probable tRNA sulfurtransferase (401 aa).

A THUMP domain is found at 60-165; the sequence is EAVMARLKHV…EDATYLTFRD (106 aa). ATP is bound by residues 183-184, 208-209, R265, G287, and Q296; these read MI and HF.

The protein belongs to the ThiI family.

It is found in the cytoplasm. The enzyme catalyses [ThiI sulfur-carrier protein]-S-sulfanyl-L-cysteine + a uridine in tRNA + 2 reduced [2Fe-2S]-[ferredoxin] + ATP + H(+) = [ThiI sulfur-carrier protein]-L-cysteine + a 4-thiouridine in tRNA + 2 oxidized [2Fe-2S]-[ferredoxin] + AMP + diphosphate. It carries out the reaction [ThiS sulfur-carrier protein]-C-terminal Gly-Gly-AMP + S-sulfanyl-L-cysteinyl-[cysteine desulfurase] + AH2 = [ThiS sulfur-carrier protein]-C-terminal-Gly-aminoethanethioate + L-cysteinyl-[cysteine desulfurase] + A + AMP + 2 H(+). The protein operates within cofactor biosynthesis; thiamine diphosphate biosynthesis. Catalyzes the ATP-dependent transfer of a sulfur to tRNA to produce 4-thiouridine in position 8 of tRNAs, which functions as a near-UV photosensor. Also catalyzes the transfer of sulfur to the sulfur carrier protein ThiS, forming ThiS-thiocarboxylate. This is a step in the synthesis of thiazole, in the thiamine biosynthesis pathway. The sulfur is donated as persulfide by IscS. The chain is Probable tRNA sulfurtransferase from Bacillus licheniformis (strain ATCC 14580 / DSM 13 / JCM 2505 / CCUG 7422 / NBRC 12200 / NCIMB 9375 / NCTC 10341 / NRRL NRS-1264 / Gibson 46).